The following is a 63-amino-acid chain: Hirudin-P6 (63 aa).

The segment at 1-3 is interaction with thrombin active site; the sequence is MRY. 3 disulfides stabilise this stretch: C6–C14, C16–C28, and C22–C37. Positions 35-55 are enriched in basic and acidic residues; the sequence is KKCVEGEGTRKPQNEGQHDFD. The interval 35-63 is disordered; sequence KKCVEGEGTRKPQNEGQHDFDPIPEEYLS. A glycan (O-linked (GalNAc...) threonine) is linked at T43. The tract at residues 53 to 63 is interaction with fibrinogen-binding exosite of thrombin; that stretch reads DFDPIPEEYLS. A Sulfotyrosine modification is found at Y61.

This sequence belongs to the protease inhibitor I14 (hirudin) family. Post-translationally, O-linked glycan consists of Fuc-Gal-GalNAc trisaccharide.

Its subcellular location is the secreted. Functionally, hirudin is a potent thrombin-specific protease inhibitor. It forms a stable non-covalent complex with alpha-thrombin, thereby abolishing its ability to cleave fibrinogen. The sequence is that of Hirudin-P6 from Hirudinaria manillensis (Asian medical leech).